The sequence spans 68 residues: DNA-directed RNA polymerase subunit omega (68 aa).

Belongs to the RNA polymerase subunit omega family. In terms of assembly, the RNAP catalytic core consists of 2 alpha, 1 beta, 1 beta' and 1 omega subunit. When a sigma factor is associated with the core the holoenzyme is formed, which can initiate transcription.

It carries out the reaction RNA(n) + a ribonucleoside 5'-triphosphate = RNA(n+1) + diphosphate. In terms of biological role, promotes RNA polymerase assembly. Latches the N- and C-terminal regions of the beta' subunit thereby facilitating its interaction with the beta and alpha subunits. The protein is DNA-directed RNA polymerase subunit omega of Dechloromonas aromatica (strain RCB).